The primary structure comprises 208 residues: MANPKADRLIQFLTEQGITSPQVLAAIHALPREFFVAPAMMHQAYDNNALPIGQGQTISQPYIVAKMTELLALTPETKVLEIGTGSGYQTAVLAKLVNHVFTVERIKTLQWDAKRRLKQLDIYNVSTKHGDGWQGWPARGPFDAILVTAAAAKVPQSLLDQLAEGGRMVIPVGEDEQYLYKIVRQGGQFISERVEAVRFVPLVAGDLA.

S59 is an active-site residue.

This sequence belongs to the methyltransferase superfamily. L-isoaspartyl/D-aspartyl protein methyltransferase family.

It is found in the cytoplasm. It carries out the reaction [protein]-L-isoaspartate + S-adenosyl-L-methionine = [protein]-L-isoaspartate alpha-methyl ester + S-adenosyl-L-homocysteine. Its function is as follows. Catalyzes the methyl esterification of L-isoaspartyl residues in peptides and proteins that result from spontaneous decomposition of normal L-aspartyl and L-asparaginyl residues. It plays a role in the repair and/or degradation of damaged proteins. This is Protein-L-isoaspartate O-methyltransferase from Vibrio cholerae serotype O1 (strain ATCC 39541 / Classical Ogawa 395 / O395).